Reading from the N-terminus, the 1588-residue chain is Paternally-expressed gene 3 protein (1588 aa).

The SCAN box domain occupies 46–128 (HQRFRNLIYV…TLLENYKEMY (83 aa)). Disordered regions lie at residues 128–230 (YQPE…ESYQ), 266–306 (DGHS…RRGI), and 319–349 (KFIKDVSRSSKSGRARESSDRSQRFPRMSDD). Positions 129-142 (QPEDDNNSDVTSDD) are enriched in acidic residues. Composition is skewed to basic and acidic residues over residues 143-152 (DMTRNRRESS), 161-182 (SGDRDWDRRGRSRDMEPRDRWS), 206-225 (FEMDRDDDRDSRAYESRSQD), and 295-306 (PEAKKSTHRRGI). 3 C2H2-type zinc fingers span residues 454–476 (YVCDECGRSFSVISEFVEHQIMH), 507–529 (FECKDCGETFNKSAALAEHRKIH), and 565–587 (YECRVCKETFLHSSALIEHQKIH). Residues 588 to 607 (FGDDKDNEREHERERERGET) show a composition bias toward basic and acidic residues. The segment at 588 to 610 (FGDDKDNEREHERERERGETFRP) is disordered. The C2H2-type 4 zinc-finger motif lies at 627 to 649 (YECKVCGETFLHSSSLKEHQKIH). Residues 838-930 (LVASKPPRSH…EFSVPSSNVR (93 aa)) form a disordered region. A compositionally biased stretch (basic and acidic residues) spans 868-881 (LNDKRQKIPARENP). The C2H2-type 5 zinc finger occupies 969–991 (YECQECGECFAHSSDLTEHQKIH). The tract at residues 1056 to 1104 (EKSHGEESQGENTDGEETHSEETHGQETIEDPVIQGSDMEDPQKDDPDD) is disordered. Basic and acidic residues predominate over residues 1071-1082 (EETHSEETHGQE). 5 C2H2-type zinc fingers span residues 1107-1129 (YECEDCGLGFVDLTDLTDHQKVH), 1163-1185 (YECPKCGESFIHSSFLFEHQRIH), 1225-1247 (IRCLLCGQGFIHSSALNEHMRLH), 1282-1304 (FECAVCGESFINPAELADHVTVH), and 1332-1354 (YECKDCGKSFIHSTVLTKHKELH). Positions 1393–1495 (EAAEPEVEAX…GIEDPEEGED (103 aa)) are disordered. Residues 1395–1415 (AEPEVEAXEPEVEAAEPEVEA) are compositionally biased toward acidic residues. 7 tandem repeats follow at residues 1397–1403 (PEVEAXE), 1404–1410 (PEVEAAE), 1411–1417 (PEVEAAE), 1418–1422 (PNGEA), 1425–1429 (PDGEA), 1432–1436 (PIGEA), and 1439–1443 (PNGEA). A 3 X 7 AA repeat of P-E-V-E-A-A-E region spans residues 1397-1417 (PEVEAXEPEVEAAEPEVEAAE). A 4 X 5 AA repeat of P-X-G-E-A region spans residues 1418 to 1443 (PNGEAEGPDGEAAEPIGEAGQPNGEA). 2 stretches are compositionally biased toward acidic residues: residues 1449–1466 (DADEPDGAGIEDPEERAE) and 1475–1495 (PEGDADEPDGVGIEDPEEGED). C2H2-type zinc fingers lie at residues 1505–1527 (YDCHECTETFTSSTAFGEHLKTH) and 1564–1586 (FKCDVCGQLFNDRLSLARHQNTH).

It belongs to the krueppel C2H2-type zinc-finger protein family. As to quaternary structure, homodimer. Interacts with SIAH1A and SIAH2. Interacts with TRAF2.

The protein resides in the nucleus. It localises to the cytoplasm. Its function is as follows. Induces apoptosis in cooperation with SIAH1A. Acts as a mediator between p53/TP53 and BAX in a neuronal death pathway that is activated by DNA damage. Acts synergistically with TRAF2 and inhibits TNF induced apoptosis through activation of NF-kappa-B. The protein is Paternally-expressed gene 3 protein (PEG3) of Pan paniscus (Pygmy chimpanzee).